We begin with the raw amino-acid sequence, 157 residues long: MFGTSVSALCLLFLLSVCTACYISNCPIGGKRSALAFPSRKCMSCGPGDRGRCFGPNICCGEGMGCYVGSPEAAGCVEENYLPSPCEVGGRVCGSEEGRCAAPGICCDVEGCSIDQSCTEEDEAEYISQSVSSSHGHDLLMKLLNMISHTPPHRVHK.

The N-terminal stretch at 1–20 (MFGTSVSALCLLFLLSVCTA) is a signal peptide. Cys-21 and Cys-26 are joined by a disulfide. The residue at position 29 (Gly-29) is a Glycine amide. Disulfide bonds link Cys-42-Cys-86, Cys-45-Cys-59, Cys-53-Cys-76, Cys-60-Cys-66, Cys-93-Cys-106, Cys-100-Cys-118, and Cys-107-Cys-112.

The protein belongs to the vasopressin/oxytocin family. In terms of processing, seven disulfide bonds are present in neurophysin.

It is found in the secreted. In terms of biological role, isotocin causes contraction of smooth muscles. This is Isotocin-neurophysin IT 1 from Oncorhynchus masou (Cherry salmon).